Consider the following 399-residue polypeptide: Serine/threonine-protein kinase PknL (399 aa).

Residues 1–368 (MVEAGTRDPL…FIWARQHARR (368 aa)) lie on the Cytoplasmic side of the membrane. The Protein kinase domain maps to 19–278 (YLVQAKIASG…IAMGADLEAI (260 aa)). ATP contacts are provided by residues 25-33 (IASGGTSTV) and Lys48. At Thr32 the chain carries Phosphothreonine; by autocatalysis. The residue at position 62 (Thr62) is a Phosphothreonine; by autocatalysis. Asp142 serves as the catalytic Proton acceptor. 3 positions are modified to phosphothreonine; by autocatalysis: Thr173, Thr175, and Thr323. The interval 312–346 (GQLGAKPVHHPTRQLTRQPGDCSEPASGSEPEHEP) is disordered. The chain crosses the membrane as a helical span at residues 369-389 (MVLVWVSVVLAITGLVASAAW). The Extracellular segment spans residues 390–399 (TIGSNLSGLL).

Belongs to the protein kinase superfamily. Ser/Thr protein kinase family. In terms of processing, autophosphorylated. Thr-173 is required for autophosphorylation and transphosphorylation activities. Thr-175 is not necessary for autophosphorylation activity, but is required for full kinase activity.

The protein resides in the cell membrane. The enzyme catalyses L-seryl-[protein] + ATP = O-phospho-L-seryl-[protein] + ADP + H(+). The catalysed reaction is L-threonyl-[protein] + ATP = O-phospho-L-threonyl-[protein] + ADP + H(+). In terms of biological role, phosphorylates the DNA-binding protein MT2231. May be involved in the regulation of cell division and cell envelope biosynthesis. In Mycobacterium tuberculosis (strain CDC 1551 / Oshkosh), this protein is Serine/threonine-protein kinase PknL (pknL).